Consider the following 250-residue polypeptide: 5-oxoprolinase subunit A (250 aa).

This sequence belongs to the LamB/PxpA family. As to quaternary structure, forms a complex composed of PxpA, PxpB and PxpC.

It catalyses the reaction 5-oxo-L-proline + ATP + 2 H2O = L-glutamate + ADP + phosphate + H(+). In terms of biological role, catalyzes the cleavage of 5-oxoproline to form L-glutamate coupled to the hydrolysis of ATP to ADP and inorganic phosphate. The chain is 5-oxoprolinase subunit A from Streptomyces avermitilis (strain ATCC 31267 / DSM 46492 / JCM 5070 / NBRC 14893 / NCIMB 12804 / NRRL 8165 / MA-4680).